The following is a 165-amino-acid chain: Ecotin-like protein 4 (165 aa).

Belongs to the protease inhibitor I11 (ecotin) family.

The sequence is that of Ecotin-like protein 4 from Trypanosoma brucei brucei (strain 927/4 GUTat10.1).